The chain runs to 700 residues: E3 ubiquitin-protein ligase SspH1 (700 aa).

Residues 1–395 (MFNIRNTQPS…HSGIRIHFDM (395 aa)) are interaction with target proteins. 8 LRR repeats span residues 217–238 (HITTLVIPDNNLTSLPELPEGL), 239–257 (RELEVSGNLQLTSLPSLPQ), 258–279 (GLQKLWAYNNWLASLPTLPPGL), 280–297 (GDLAVSNNQLTSLPEMPP), 298–319 (ALRELRVSGNNLTSLPALPSGL), 320–337 (QKLWAYNNRLTSLPEMSP), 338–360 (GLQELDVSHNQLTRLPQSLTGLS), and 361–381 (SAARVYLDGNPLSVRTLQALR). A linker region spans residues 396 to 403 (AGPSVPRE). An E3 ubiquitin-protein ligase catalytic domain region spans residues 404–700 (ARALHLAVAD…SYLTARWRLN (297 aa)). In terms of domain architecture, NEL spans 406–700 (ALHLAVADWL…SYLTARWRLN (295 aa)). Residue cysteine 492 is the Glycyl thioester intermediate of the active site.

It belongs to the LRR-containing bacterial E3 ligase family. In terms of assembly, interacts (via leucine-rich repeat region) with host PKN1 (via the second REM repeat). Ubiquitinated in the presence of host E1 ubiquitin-activating enzyme, E2 ubiquitin-conjugating enzyme and ubiquitin.

It is found in the secreted. The protein resides in the host cytoplasm. The protein localises to the host nucleus. The catalysed reaction is S-ubiquitinyl-[E2 ubiquitin-conjugating enzyme]-L-cysteine + [acceptor protein]-L-lysine = [E2 ubiquitin-conjugating enzyme]-L-cysteine + N(6)-ubiquitinyl-[acceptor protein]-L-lysine.. Exists in an autoinhibited state in the absence of substrate protein, due to interactions of the leucine-rich repeat domain with the catalytic domain. Is activated upon binding to a substrate protein. Effector proteins function to alter host cell physiology and promote bacterial survival in host tissues. This protein is an E3 ubiquitin-protein ligase that interferes with the host's ubiquitination pathway and targets host proteins for proteasomal degradation. Can ubiquitinate ubiquitin, giving rise to polyubiquitin chains (in vitro). Polyubiquitinates host PKN1, leading to its proteasomal degradation. Down-modulates production of host pro-inflammatory cytokines by inhibiting NF-kappa-B-dependent gene expression; this depends only partially on its E3 ubiquitin-protein ligase activity. This chain is E3 ubiquitin-protein ligase SspH1 (sspH1), found in Salmonella typhimurium (strain 14028s / SGSC 2262).